A 412-amino-acid chain; its full sequence is MYCRVFTHFSLYRLYTLSDNININKTNHNKSIGLHQHRVNYMPRSMTASSSQLKRIETRIESLSESLSKSNARKPLGKFQLNTFDNNKITKLQNEKVRPSKSSHIPVKSPIRKKGHSPAQVLQNERMDTKLLLQKLPSASRHMTLDDFEIGKVLGKGKLGKVYCVKHKTSGYIAALKVMAKKDLIDLKLEKNFRREIEIQSNLIHPKISRLYGFFYDHKNVYLILEYSIHGELYHHLKVQRRFNDATASHYIYQVALALDYLHTKHIIHRDIKPENILLSTDNCIKLSDFGWSVKSSPSSSTKRLTICGTLDYLPPEMIESNEHDYTVDIWSLGILCYEFLVGKPPFEEIDKNSTYKRIAKVDLKIPSFLSSEATDLILRLLQKSPKKRITLAEVMNHPWIMNNQQYWPNEN.

Residues 94 to 119 (NEKVRPSKSSHIPVKSPIRKKGHSPA) form a disordered region. A Protein kinase domain is found at 148 to 401 (FEIGKVLGKG…LAEVMNHPWI (254 aa)). Residues 154–162 (LGKGKLGKV) and Lys-177 contribute to the ATP site. The Proton acceptor role is filled by Asp-271.

The protein belongs to the protein kinase superfamily. Ser/Thr protein kinase family. Aurora subfamily.

The protein resides in the nucleus. It is found in the cytoplasm. The protein localises to the cytoskeleton. It localises to the spindle. Its subcellular location is the chromosome. The protein resides in the centromere. It is found in the kinetochore. It catalyses the reaction L-seryl-[protein] + ATP = O-phospho-L-seryl-[protein] + ADP + H(+). It carries out the reaction L-threonyl-[protein] + ATP = O-phospho-L-threonyl-[protein] + ADP + H(+). Functionally, component of the chromosomal passenger complex (CPC), a complex that acts as a key regulator of chromosome segregation and cytokinesis. Has a role in error-correction of aberrent kinetochore-microtubule attachments to ensure that sister kinetochores become bioriented and connect to opposite poles by promoting spindle assembly checkpoint signaling. In Debaryomyces hansenii (strain ATCC 36239 / CBS 767 / BCRC 21394 / JCM 1990 / NBRC 0083 / IGC 2968) (Yeast), this protein is Aurora kinase (IPL1).